The sequence spans 426 residues: MQRTHQLFQQARELIPGGVNSPVRAFKGVGGEPIFFERGEGPYMWDVDGKRYVDYVCSWGPLVAGHADPEIVRRVQETAAKGLSFGTPVELEVEMARTLCQHVPSLEMVRLVNSGTEATMSALRLARGFTGRDKIVKFQGNYHGHVDALLAQAGSGALTLGVPGCPGVPEAVVAETLTVPYNDIEAVEQCFNEHGSEIAAVIVEPVAGNMNCVPPVPGFLEKLREVCDRTDALLIFDEVMTGFRVGPQCAQGRYGITPDLTCLGKVVGGGMPVGAFGGRREIMEGLAPTGGVYQAGTLSGNPVTMAAGLATLERITAPGAFEGLEQTTTRVVDGIKERADAAGIPLATNQAGSMFGLFFTDDAPVTRFEQVKACDLDAFNRFFHAMLDEGVYLAPAAFEAGFVSLAHDDNAVQETLDAAERAFARV.

K265 is modified (N6-(pyridoxal phosphate)lysine).

Belongs to the class-III pyridoxal-phosphate-dependent aminotransferase family. HemL subfamily. Homodimer. The cofactor is pyridoxal 5'-phosphate.

It localises to the cytoplasm. The catalysed reaction is (S)-4-amino-5-oxopentanoate = 5-aminolevulinate. It participates in porphyrin-containing compound metabolism; protoporphyrin-IX biosynthesis; 5-aminolevulinate from L-glutamyl-tRNA(Glu): step 2/2. This is Glutamate-1-semialdehyde 2,1-aminomutase from Halorhodospira halophila (strain DSM 244 / SL1) (Ectothiorhodospira halophila (strain DSM 244 / SL1)).